A 460-amino-acid chain; its full sequence is Cation efflux system protein CusC (460 aa).

A signal peptide spans 1–17 (MSPCKLLPFCVALALTG). A lipid anchor (N-palmitoyl cysteine) is attached at C18. C18 carries the S-diacylglycerol cysteine lipid modification.

The protein belongs to the outer membrane factor (OMF) (TC 1.B.17) family. In terms of assembly, homotrimer. Component of the cus efflux system composed of CusA, CusB, CusC and CusF.

The protein resides in the cell outer membrane. Functionally, forms pores that allow passive diffusion of cations across the outer membrane. Part of a cation efflux system that mediates resistance to copper and silver. This Escherichia coli O157:H7 protein is Cation efflux system protein CusC (cusC).